The primary structure comprises 137 residues: Putative pre-16S rRNA nuclease (137 aa).

Belongs to the YqgF nuclease family.

It localises to the cytoplasm. Could be a nuclease involved in processing of the 5'-end of pre-16S rRNA. This chain is Putative pre-16S rRNA nuclease, found in Anaeromyxobacter dehalogenans (strain 2CP-C).